The sequence spans 209 residues: Thymidylate kinase (209 aa).

Gly-10–Ser-17 lines the ATP pocket.

It belongs to the thymidylate kinase family.

The catalysed reaction is dTMP + ATP = dTDP + ADP. In terms of biological role, phosphorylation of dTMP to form dTDP in both de novo and salvage pathways of dTTP synthesis. This is Thymidylate kinase from Photobacterium profundum (strain SS9).